A 134-amino-acid chain; its full sequence is Large ribosomal subunit protein uL16 (134 aa).

A compositionally biased stretch (basic residues) spans 1-20 (MLLQPKRTKFRKMHKGRNRG). The disordered stretch occupies residues 1–21 (MLLQPKRTKFRKMHKGRNRGT).

Belongs to the universal ribosomal protein uL16 family. In terms of assembly, part of the 50S ribosomal subunit.

Its function is as follows. Binds 23S rRNA and is also seen to make contacts with the A and possibly P site tRNAs. In Blochmanniella pennsylvanica (strain BPEN), this protein is Large ribosomal subunit protein uL16.